We begin with the raw amino-acid sequence, 553 residues long: Urocanate hydratase (553 aa).

Residues 45-46, glutamine 123, 169-171, aspartate 189, arginine 194, 235-236, 256-260, 266-267, tyrosine 315, and glycine 485 contribute to the NAD(+) site; these read GG, GMG, NA, QTSAH, and YV.

It belongs to the urocanase family. NAD(+) serves as cofactor.

The protein resides in the cytoplasm. The catalysed reaction is 4-imidazolone-5-propanoate = trans-urocanate + H2O. The protein operates within amino-acid degradation; L-histidine degradation into L-glutamate; N-formimidoyl-L-glutamate from L-histidine: step 2/3. Catalyzes the conversion of urocanate to 4-imidazolone-5-propionate. The sequence is that of Urocanate hydratase from Staphylococcus aureus (strain COL).